A 41-amino-acid chain; its full sequence is MKIRNSLKSAKVRDKDCRVVRRHGKVYVINKKNPRMKARQG.

The protein belongs to the bacterial ribosomal protein bL36 family.

The protein is Large ribosomal subunit protein bL36 of Gluconacetobacter diazotrophicus (strain ATCC 49037 / DSM 5601 / CCUG 37298 / CIP 103539 / LMG 7603 / PAl5).